The sequence spans 340 residues: MIFIDACFKKPTPYTPIWMMRQAGRYLPEYMEVRKQAGDFLSLCKDYKKASEVSLQPIDILDVDAAIIFSDILVVPLEMGMNLRFEKGEGPVFDNPISTLEDLEKLDDQNAHKKLNYVYDALKLTREKLSQNKALIGFCGSPWTIATYMIEGSGSKNYAKCKKMLYQNPELLHKILNKLTQVLKLYLEEQIKAGANAIQIFDSWASALEYDKFFEFSFNYMLEISNFIKSKYPNIPVILFPKGISGYLDRIDGNFDVFGVDWSTPLDLARDKLSHKYTLQGNMEPCRLYDKNAIKEGVGKILKTMQNKAHIFNLGHGILPDIPVENAKYFIKLVQESSAK.

Substrate is bound by residues Arg-21–Arg-25, Asp-71, Tyr-148, Ser-203, and His-316.

The protein belongs to the uroporphyrinogen decarboxylase family. As to quaternary structure, homodimer.

It is found in the cytoplasm. It catalyses the reaction uroporphyrinogen III + 4 H(+) = coproporphyrinogen III + 4 CO2. Its pathway is porphyrin-containing compound metabolism; protoporphyrin-IX biosynthesis; coproporphyrinogen-III from 5-aminolevulinate: step 4/4. Its function is as follows. Catalyzes the decarboxylation of four acetate groups of uroporphyrinogen-III to yield coproporphyrinogen-III. This Campylobacter jejuni (strain RM1221) protein is Uroporphyrinogen decarboxylase.